Consider the following 328-residue polypeptide: Cytochrome c biogenesis protein CcsA (328 aa).

Helical transmembrane passes span 13-33 (ISFS…LVNL), 46-66 (GIII…IFSG), 73-93 (LYES…VSYF), 101-121 (LNAI…SGLL), 146-166 (MILG…LLVI), 234-254 (IISL…VWAN), 263-283 (WDPK…YLHI), and 295-315 (AIVA…VNLL).

The protein belongs to the CcmF/CycK/Ccl1/NrfE/CcsA family. May interact with Ccs1.

The protein localises to the plastid. It is found in the chloroplast thylakoid membrane. Its function is as follows. Required during biogenesis of c-type cytochromes (cytochrome c6 and cytochrome f) at the step of heme attachment. The protein is Cytochrome c biogenesis protein CcsA of Olimarabidopsis pumila (Dwarf rocket).